A 98-amino-acid chain; its full sequence is Aspartyl/glutamyl-tRNA(Asn/Gln) amidotransferase subunit C (98 aa).

It belongs to the GatC family. As to quaternary structure, heterotrimer of A, B and C subunits.

The catalysed reaction is L-glutamyl-tRNA(Gln) + L-glutamine + ATP + H2O = L-glutaminyl-tRNA(Gln) + L-glutamate + ADP + phosphate + H(+). It catalyses the reaction L-aspartyl-tRNA(Asn) + L-glutamine + ATP + H2O = L-asparaginyl-tRNA(Asn) + L-glutamate + ADP + phosphate + 2 H(+). In terms of biological role, allows the formation of correctly charged Asn-tRNA(Asn) or Gln-tRNA(Gln) through the transamidation of misacylated Asp-tRNA(Asn) or Glu-tRNA(Gln) in organisms which lack either or both of asparaginyl-tRNA or glutaminyl-tRNA synthetases. The reaction takes place in the presence of glutamine and ATP through an activated phospho-Asp-tRNA(Asn) or phospho-Glu-tRNA(Gln). This is Aspartyl/glutamyl-tRNA(Asn/Gln) amidotransferase subunit C from Beutenbergia cavernae (strain ATCC BAA-8 / DSM 12333 / CCUG 43141 / JCM 11478 / NBRC 16432 / NCIMB 13614 / HKI 0122).